A 72-amino-acid polypeptide reads, in one-letter code: MAKEDSIEMQGTIIDTLPNTMFRVELENGHIVTAHISGKMRKNYIRILTGDKVTVQLTPYDLSKGRIVFRAR.

Positions 1 to 72 (MAKEDSIEMQ…SKGRIVFRAR (72 aa)) constitute an S1-like domain.

This sequence belongs to the IF-1 family. In terms of assembly, component of the 30S ribosomal translation pre-initiation complex which assembles on the 30S ribosome in the order IF-2 and IF-3, IF-1 and N-formylmethionyl-tRNA(fMet); mRNA recruitment can occur at any time during PIC assembly.

Its subcellular location is the cytoplasm. In terms of biological role, one of the essential components for the initiation of protein synthesis. Stabilizes the binding of IF-2 and IF-3 on the 30S subunit to which N-formylmethionyl-tRNA(fMet) subsequently binds. Helps modulate mRNA selection, yielding the 30S pre-initiation complex (PIC). Upon addition of the 50S ribosomal subunit IF-1, IF-2 and IF-3 are released leaving the mature 70S translation initiation complex. The protein is Translation initiation factor IF-1 of Psychromonas ingrahamii (strain DSM 17664 / CCUG 51855 / 37).